A 398-amino-acid polypeptide reads, in one-letter code: Small ribosomal subunit protein mS78 (rPPR3a) (398 aa).

Residues methionine 1 to arginine 19 constitute a mitochondrion transit peptide. PPR repeat units lie at residues lysine 108–arginine 142, serine 143–lysine 173, aspartate 179–proline 213, aspartate 214–isoleucine 248, aspartate 249–proline 283, aspartate 284–proline 318, and aspartate 319–valine 353.

Belongs to the PPR family. P subfamily. As to quaternary structure, component of the mitochondrial ribosome small subunit.

The protein localises to the mitochondrion. In Arabidopsis thaliana (Mouse-ear cress), this protein is Small ribosomal subunit protein mS78 (rPPR3a).